Here is a 1224-residue protein sequence, read N- to C-terminus: DNA-directed RNA polymerase subunit beta' (1224 aa).

Residues Cys-60, Cys-62, Cys-75, and Cys-78 each coordinate Zn(2+). Residues Asp-449, Asp-451, and Asp-453 each contribute to the Mg(2+) site. 4 residues coordinate Zn(2+): Cys-819, Cys-893, Cys-900, and Cys-903.

Belongs to the RNA polymerase beta' chain family. As to quaternary structure, the RNAP catalytic core consists of 2 alpha, 1 beta, 1 beta' and 1 omega subunit. When a sigma factor is associated with the core the holoenzyme is formed, which can initiate transcription. The cofactor is Mg(2+). Zn(2+) serves as cofactor.

The enzyme catalyses RNA(n) + a ribonucleoside 5'-triphosphate = RNA(n+1) + diphosphate. Its function is as follows. DNA-dependent RNA polymerase catalyzes the transcription of DNA into RNA using the four ribonucleoside triphosphates as substrates. This chain is DNA-directed RNA polymerase subunit beta', found in Lactobacillus johnsonii (strain CNCM I-12250 / La1 / NCC 533).